The chain runs to 251 residues: SPbeta prophage-derived putative antirepressor protein YoqD (251 aa).

In Bacillus subtilis (strain 168), this protein is SPbeta prophage-derived putative antirepressor protein YoqD (yoqD).